A 105-amino-acid chain; its full sequence is Large ribosomal subunit protein uL24 (105 aa).

This sequence belongs to the universal ribosomal protein uL24 family. In terms of assembly, part of the 50S ribosomal subunit.

Its function is as follows. One of two assembly initiator proteins, it binds directly to the 5'-end of the 23S rRNA, where it nucleates assembly of the 50S subunit. One of the proteins that surrounds the polypeptide exit tunnel on the outside of the subunit. The chain is Large ribosomal subunit protein uL24 from Methylobacillus flagellatus (strain ATCC 51484 / DSM 6875 / VKM B-1610 / KT).